The sequence spans 722 residues: Polyribonucleotide nucleotidyltransferase (722 aa).

Positions 487 and 493 each coordinate Mg(2+). The 60-residue stretch at 554-613 (PRMVSFKIHPDKIREVIGKGGATIQALTKETGCSIDIKDDGTVTIASTSAEGMAEAKARI) folds into the KH domain. The region spanning 623-691 (GKIYEGPVVK…ERGRLRLSLK (69 aa)) is the S1 motif domain.

It belongs to the polyribonucleotide nucleotidyltransferase family. It depends on Mg(2+) as a cofactor.

The protein resides in the cytoplasm. The catalysed reaction is RNA(n+1) + phosphate = RNA(n) + a ribonucleoside 5'-diphosphate. In terms of biological role, involved in mRNA degradation. Catalyzes the phosphorolysis of single-stranded polyribonucleotides processively in the 3'- to 5'-direction. In Polynucleobacter asymbioticus (strain DSM 18221 / CIP 109841 / QLW-P1DMWA-1) (Polynucleobacter necessarius subsp. asymbioticus), this protein is Polyribonucleotide nucleotidyltransferase.